The sequence spans 574 residues: Interleukin-22 receptor subunit alpha-1 (574 aa).

Positions 1-15 (MRTLLTILTVGSLAA) are cleaved as a signal peptide. The Extracellular segment spans residues 16 to 228 (HAPEDPSDLL…VKTLPDRTWT (213 aa)). 2 consecutive Fibronectin type-III domains span residues 17-124 (APED…LKPP) and 141-221 (PTPT…RVKT). A disulfide bond links cysteine 71 and cysteine 79. N-linked (GlcNAc...) asparagine glycosylation is found at asparagine 80 and asparagine 172. Cysteine 128 and cysteine 217 are oxidised to a cystine. A helical transmembrane segment spans residues 229-249 (YSFSGAFLFSMGFLVAVLCYL). Residues 250-574 (SYRYVTKPPA…GLALTVQWES (325 aa)) lie on the Cytoplasmic side of the membrane. 3 disordered regions span residues 388–440 (SSYA…AGSC), 454–489 (AMEESQEAKSLHQPLGICTDRTSDPNVLHSGEEGTP), and 507–560 (HPMS…TELD). 2 positions are modified to phosphoserine: serine 410 and serine 414.

It belongs to the type II cytokine receptor family. Heterodimer with IL10RB and with IL20RB. IL22 binding to heterodimer is greater than binding to IL22RA1 alone. Interacts with FBXW12; the interaction promotes ubiquitination of IL22RA1. Ubiquitinated. As to expression, expressed in colon, liver, lung, pancreas and kidney. No expression in immune cells such as monocytes, T-cells, and NK-cells. Expressed in keratinocytes of normal skin as well as in psoriatic skin lesion. Detected in normal blood brain barrier endothelial cells as well as in multiple sclerosis lesions; Strongly expressed on central nervous system vessels within infiltrated multiple sclerosis lesions. Overexpressed in synovial fluid cells from rheumatoid arthritis and spondyloarthropathy patients.

It is found in the cell membrane. In terms of biological role, component of the receptor for IL20, IL22 and IL24. Component of IL22 receptor formed by IL22RA1 and IL10RB enabling IL22 signaling via JAK/STAT pathways. IL22 also induces activation of MAPK1/MAPK3 and Akt kinases pathways. Component of one of the receptor for IL20 and IL24 formed by IL22RA1 and IL20RB also signaling through STATs activation. Mediates IL24 antiangiogenic activity as well as IL24 inhibitory effect on endothelial cell tube formation and differentiation. This Homo sapiens (Human) protein is Interleukin-22 receptor subunit alpha-1 (IL22RA1).